The sequence spans 252 residues: Trans-aconitate 2-methyltransferase (252 aa).

This sequence belongs to the methyltransferase superfamily. Tam family.

It is found in the cytoplasm. It carries out the reaction trans-aconitate + S-adenosyl-L-methionine = (E)-3-(methoxycarbonyl)pent-2-enedioate + S-adenosyl-L-homocysteine. Its function is as follows. Catalyzes the S-adenosylmethionine monomethyl esterification of trans-aconitate. This Escherichia coli O139:H28 (strain E24377A / ETEC) protein is Trans-aconitate 2-methyltransferase.